A 576-amino-acid polypeptide reads, in one-letter code: Threonine dehydratase, mitochondrial (576 aa).

Lys109 is modified (N6-(pyridoxal phosphate)lysine). 2 ACT-like domains span residues 393–473 (VFML…DISD) and 495–566 (RIIS…DETD).

The protein belongs to the serine/threonine dehydratase family. In terms of assembly, homotetramer. Pyridoxal 5'-phosphate serves as cofactor.

The protein localises to the mitochondrion. The catalysed reaction is L-threonine = 2-oxobutanoate + NH4(+). The protein operates within amino-acid biosynthesis; L-isoleucine biosynthesis; 2-oxobutanoate from L-threonine: step 1/1. With respect to regulation, isoleucine allosterically inhibits while valine allosterically activates this enzyme. This is Threonine dehydratase, mitochondrial (ILV1) from Saccharomyces cerevisiae (strain ATCC 204508 / S288c) (Baker's yeast).